A 122-amino-acid polypeptide reads, in one-letter code: Small ribosomal subunit protein uS13 (122 aa).

The span at 95-116 shows a compositional bias: basic residues; sequence GLPVRGQKTKTNARTRKGRRKT. The segment at 95–122 is disordered; the sequence is GLPVRGQKTKTNARTRKGRRKTVGAATK.

It belongs to the universal ribosomal protein uS13 family. Part of the 30S ribosomal subunit. Forms a loose heterodimer with protein S19. Forms two bridges to the 50S subunit in the 70S ribosome.

Located at the top of the head of the 30S subunit, it contacts several helices of the 16S rRNA. In the 70S ribosome it contacts the 23S rRNA (bridge B1a) and protein L5 of the 50S subunit (bridge B1b), connecting the 2 subunits; these bridges are implicated in subunit movement. Contacts the tRNAs in the A and P-sites. This Campylobacter concisus (strain 13826) protein is Small ribosomal subunit protein uS13.